Reading from the N-terminus, the 293-residue chain is Ribonuclease HIII (293 aa).

An RNase H type-2 domain is found at 78–293; that stretch reads LPLIGTDEVG…TEKAKKRLER (216 aa). The a divalent metal cation site is built by aspartate 84, glutamate 85, and aspartate 187.

This sequence belongs to the RNase HII family. RnhC subfamily. The cofactor is Mn(2+). Mg(2+) serves as cofactor.

The protein resides in the cytoplasm. The enzyme catalyses Endonucleolytic cleavage to 5'-phosphomonoester.. Its function is as follows. Endonuclease that specifically degrades the RNA of RNA-DNA hybrids. The sequence is that of Ribonuclease HIII (rnhC) from Streptococcus pneumoniae serotype 4 (strain ATCC BAA-334 / TIGR4).